Consider the following 675-residue polypeptide: Potassium-transporting ATPase ATP-binding subunit (675 aa).

Helical transmembrane passes span 38–58 (VMFV…ANLV), 67–87 (LAIT…EGMA), 216–236 (IALS…VVTL), and 253–273 (IALL…AIGI). Residue D304 is the 4-aspartylphosphate intermediate of the active site. ATP contacts are provided by residues D341, E345, 371–378 (FTAQTRMS), and K389. 2 residues coordinate Mg(2+): D512 and D516. Helical transmembrane passes span 582-602 (FAIL…LNVM), 610-630 (AVLS…PLAL), and 654-674 (GGIL…GGLM).

The protein belongs to the cation transport ATPase (P-type) (TC 3.A.3) family. Type IA subfamily. In terms of assembly, the system is composed of three essential subunits: KdpA, KdpB and KdpC.

It is found in the cell membrane. The catalysed reaction is K(+)(out) + ATP + H2O = K(+)(in) + ADP + phosphate + H(+). Part of the high-affinity ATP-driven potassium transport (or Kdp) system, which catalyzes the hydrolysis of ATP coupled with the electrogenic transport of potassium into the cytoplasm. This subunit is responsible for energy coupling to the transport system and for the release of the potassium ions to the cytoplasm. This Deinococcus radiodurans (strain ATCC 13939 / DSM 20539 / JCM 16871 / CCUG 27074 / LMG 4051 / NBRC 15346 / NCIMB 9279 / VKM B-1422 / R1) protein is Potassium-transporting ATPase ATP-binding subunit.